A 175-amino-acid polypeptide reads, in one-letter code: MQIKSRIRTIAHYPHEGIMFRDITTLLKDPVGLRATIQEIASRYKSMKIDKVAGIESRGFIIGAPVAYELGVGFVPVRKKGKLPAETRGRDYQLEYGSDRIEIHVDAIQKGDRVLLVDDLIATGGTAEAAAGLIHEMGGEVVECSFVIDLPDIGGRARLEDQGLKVFALCEFEGN.

The protein belongs to the purine/pyrimidine phosphoribosyltransferase family. In terms of assembly, homodimer.

It localises to the cytoplasm. The enzyme catalyses AMP + diphosphate = 5-phospho-alpha-D-ribose 1-diphosphate + adenine. It functions in the pathway purine metabolism; AMP biosynthesis via salvage pathway; AMP from adenine: step 1/1. Its function is as follows. Catalyzes a salvage reaction resulting in the formation of AMP, that is energically less costly than de novo synthesis. This chain is Adenine phosphoribosyltransferase, found in Nitrosospira multiformis (strain ATCC 25196 / NCIMB 11849 / C 71).